Consider the following 210-residue polypeptide: Large ribosomal subunit protein bL25 (210 aa).

This sequence belongs to the bacterial ribosomal protein bL25 family. CTC subfamily. As to quaternary structure, part of the 50S ribosomal subunit; part of the 5S rRNA/L5/L18/L25 subcomplex. Contacts the 5S rRNA. Binds to the 5S rRNA independently of L5 and L18.

This is one of the proteins that binds to the 5S RNA in the ribosome where it forms part of the central protuberance. The chain is Large ribosomal subunit protein bL25 from Herminiimonas arsenicoxydans.